We begin with the raw amino-acid sequence, 332 residues long: MSEDPDRGNGTKTYLSDDIDEARAIGSDLYYPHEVRVLGDEHIFQMRMTAASFGPVTLGRLDYSTEVEIFTNELRDSYHVNIPMRGELVTGSGRARTVATPHRAAVYRCDQRTLLRGWASPYPTPVLALKIDRRALEDQLAARLGSEIVDPIVFGMDLDLDTVVGRQWLSLVEGLSHQLDSPEALALHPIVSTPMAECLMSGLLVAAEHDYRARLYEPKPALPGIVRLAVDYLEAHAQQPLTVAQVARNVGVSVRSLQVGFQNSLGTTPMRQLKIIRMQKARKDLLRADPASEGVTEIAQRWGFLHVGRFAGEYKQTFGVSPSEDLRTVPFR.

An HTH araC/xylS-type domain is found at 227-328 (RLAVDYLEAH…GVSPSEDLRT (102 aa)). DNA-binding regions (H-T-H motif) lie at residues 244 to 265 (AQVA…QNSL) and 295 to 318 (VTEI…KQTF).

In terms of biological role, probably involved in the positive regulation of the thc operon for the degradation of the thiocarbamate herbicide EPTC. The polypeptide is Probable thc operon regulatory protein (thcR) (Rhodococcus erythropolis (Arthrobacter picolinophilus)).